Here is a 90-residue protein sequence, read N- to C-terminus: Auxin-responsive protein SAUR23 (90 aa).

This sequence belongs to the ARG7 family.

The protein resides in the cell membrane. Functionally, functions as a positive effector of cell expansion through modulation of auxin transport. This chain is Auxin-responsive protein SAUR23, found in Arabidopsis thaliana (Mouse-ear cress).